The sequence spans 70 residues: Small, acid-soluble spore protein 1 (70 aa).

It belongs to the alpha/beta-type SASP family.

In terms of biological role, SASP are bound to spore DNA. They are double-stranded DNA-binding proteins that cause DNA to change to an a-like conformation. They protect the DNA backbone from chemical and enzymatic cleavage and are thus involved in dormant spore's high resistance to UV light. In Bacillus cereus, this protein is Small, acid-soluble spore protein 1 (sasP-1).